Here is a 316-residue protein sequence, read N- to C-terminus: Very-long-chain 3-oxooacyl-coA reductase let-767 (316 aa).

NADP(+) is bound by residues 52–80 (ITGA…VSRT) and D106. S189 lines the substrate pocket. Catalysis depends on Y202, which acts as the Proton acceptor. K206 contacts NADP(+).

Belongs to the short-chain dehydrogenases/reductases (SDR) family. 17-beta-HSD 3 subfamily.

The catalysed reaction is a very-long-chain (3R)-3-hydroxyacyl-CoA + NADP(+) = a very-long-chain 3-oxoacyl-CoA + NADPH + H(+). The protein operates within lipid metabolism; fatty acid biosynthesis. In terms of biological role, required for branched chain fatty acid synthesis. Catalyzes the reduction of the 3-ketoacyl-CoA intermediate that is formed in each cycle of fatty acid elongation. Very long-chain fatty acids (VLCFAs) serve as precursors for ceramide and sphingolipids. May also be required for sterol hormone production. This Caenorhabditis briggsae protein is Very-long-chain 3-oxooacyl-coA reductase let-767.